The primary structure comprises 1032 residues: Toll-like receptor 9 (1032 aa).

Residues 1-25 (MGFCRSALHPLSLLVQAIMLAMTLA) form the signal peptide. The Extracellular portion of the chain corresponds to 26–818 (LGTLPAFLPC…CLDEALSWDC (793 aa)). A disulfide bond links cysteine 35 and cysteine 45. Residue 47 to 51 (WLFLK) participates in DNA binding. LRR repeat units lie at residues 62 to 85 (RGNV…DFAH), 87 to 110 (PSLR…HFPC), 122 to 147 (VPTL…SLIS), 150 to 166 (LSHT…LAGL), 167 to 190 (HALR…ALEV), 198 to 221 (LGNL…LPSS), 223 to 242 (EYLL…DLAN), 243 to 268 (LTAL…CMEC), 283 to 306 (LSRL…WFRG), 308 to 332 (GNLR…AFQG), 333 to 356 (LTQL…HLSL), 363 to 386 (LVAL…TLRP), 390 to 413 (LPML…IFRA), and 415 to 440 (PGLR…MGEA). Asparagine 64 is a glycosylation site (N-linked (GlcNAc...) asparagine). Residues 72–77 (SNRIHH) and 95–109 (KWNC…MHFP) contribute to the DNA site. The cysteines at positions 98 and 110 are disulfide-linked. Asparagine 129 is a glycosylation site (N-linked (GlcNAc...) asparagine). A DNA-binding site is contributed by tyrosine 132. Cysteines 178 and 184 form a disulfide. 179–181 (YYK) is a binding site for DNA. The N-linked (GlcNAc...) asparagine glycan is linked to asparagine 200. Residue tyrosine 208 coordinates DNA. N-linked (GlcNAc...) asparagine glycans are attached at residues asparagine 210 and asparagine 242. 2 disulfide bridges follow: cysteine 255-cysteine 268 and cysteine 258-cysteine 265. 2 S-palmitoyl cysteine lipidation sites follow: cysteine 258 and cysteine 265. An N-linked (GlcNAc...) asparagine glycan is attached at asparagine 300. Asparagine 340 carries N-linked (GlcNAc...) asparagine glycosylation. N-linked (GlcNAc...) asparagine glycans are attached at residues asparagine 469, asparagine 474, and asparagine 513. 12 LRR repeats span residues 470–494 (CSTL…MFAQ), 496–519 (SHLQ…QFLP), 520–543 (LTGL…SFTE), 545–572 (PRLE…SFVA), 574–598 (LRTL…LCST), 600–622 (LRAL…LYLH), 627–650 (LSGL…TLRN), 652–675 (PKSL…SLHF), 676–699 (LPKL…SLPA), 701–723 (TRLR…FFSK), 724–747 (AKEL…WFGP), and 749–772 (ASAL…AFMD). A disulfide bridge connects residues cysteine 470 and cysteine 500. N-linked (GlcNAc...) asparagine glycosylation occurs at asparagine 567. An N-linked (GlcNAc...) asparagine glycan is attached at asparagine 694. N-linked (GlcNAc...) asparagine glycosylation is present at asparagine 731. 2 disulfide bridges follow: cysteine 764/cysteine 790 and cysteine 766/cysteine 809. A helical transmembrane segment spans residues 819–839 (FALSLLAVALGLGVPMLHHLC). Topologically, residues 840–1032 (GWDLWYCFHL…RNFCQGPTAE (193 aa)) are cytoplasmic. A TIR domain is found at 868 to 1013 (LPYDAFVVFD…SFWAQLGMAL (146 aa)).

This sequence belongs to the Toll-like receptor family. Monomer and homodimer. Exists as a monomer in the absence of unmethylated cytidine-phosphate-guanosine (CpG) ligand. Proteolytic processing of an insertion loop (Z-loop) is required for homodimerization upon binding to the unmethylated CpG ligand leading to its activation. Interacts with MYD88 via their respective TIR domains. Interacts with BTK. Interacts (via transmembrane domain) with UNC93B1. Interacts with CD300LH; the interaction may promote full activation of TLR9-triggered innate responses. Interacts with CNPY3 and HSP90B1; this interaction is required for proper folding in the endoplasmic reticulum. Interacts with SMPDL3B. Interacts with CD82; this interaction is essential for TLR9-dependent myddosome formation in response to CpG stimulation. In terms of processing, activated by proteolytic cleavage of the flexible loop between repeats LRR14 and LRR15 within the ectodomain. Cleavage requires UNC93B1. Proteolytically processed by first removing the majority of the ectodomain by either asparagine endopeptidase (AEP) or a cathepsin followed by a trimming event that is solely cathepsin mediated and required for optimal receptor signaling. Palmitoylated by ZDHHC3 in the Golgi regulates TLR9 trafficking from the Golgi to endosomes. Depalmitoylation by PPT1 controls the release of TLR9 from UNC93B1 in endosomes. As to expression, highly expressed in spleen, lymph node, tonsil and peripheral blood leukocytes, especially in plasmacytoid pre-dendritic cells. Levels are much lower in monocytes and CD11c+ immature dendritic cells. Also detected in lung and liver.

It localises to the endoplasmic reticulum membrane. The protein localises to the early endosome membrane. The protein resides in the lysosome. It is found in the cytoplasmic vesicle. Its subcellular location is the phagosome. It localises to the golgi apparatus membrane. In terms of biological role, key component of innate and adaptive immunity. TLRs (Toll-like receptors) control host immune response against pathogens through recognition of molecular patterns specific to microorganisms. TLR9 is a nucleotide-sensing TLR which is activated by unmethylated cytidine-phosphate-guanosine (CpG) dinucleotides. Acts via MYD88 and TRAF6, leading to NF-kappa-B activation, cytokine secretion and the inflammatory response. Controls lymphocyte response to Helicobacter infection. Upon CpG stimulation, induces B-cell proliferation, activation, survival and antibody production. In Homo sapiens (Human), this protein is Toll-like receptor 9 (TLR9).